A 29-amino-acid polypeptide reads, in one-letter code: Lambda-theraphotoxin-Ec2a (29 aa).

Intrachain disulfides connect Cys-2–Cys-16, Cys-9–Cys-21, and Cys-15–Cys-25.

The protein belongs to the neurotoxin 30 (phrixotoxin) family. As to expression, expressed by the venom gland.

It is found in the secreted. Functionally, insect-selective neurotoxin that potently blocks insect calcium-activated potassium (BKCa) channels (Slo-type) in cockroach dorsal unpaired median (DUM) neurons (IC(50)=3.7 nM). This occurs in the absence of any shifts in the voltage dependence of activation. At high concentrations (330 nM), it partially inhibits cockroach delayed-rectifier potassium channels (Kv) currents. May interact with the turret and/or loop region of the external entrance to the channel and does not project deeply into the pore of the channel. In vivo, does not show toxicity in mice after intracerebroventricular injection of up to 25 pmol/g (1.8 ug/20 g mouse). The polypeptide is Lambda-theraphotoxin-Ec2a (Eucratoscelus constrictus (African red-rump baboon spider)).